A 508-amino-acid chain; its full sequence is Phenylalanine--tRNA ligase alpha subunit (508 aa).

An N-acetylalanine modification is found at Ala2. Thr190 is subject to Phosphothreonine. Ser193 and Ser301 each carry phosphoserine. Lys311 bears the N6-acetyllysine mark. Residues Thr329, 372 to 374, and Tyr412 contribute to the L-phenylalanine site; that span reads QIE. Mg(2+) is bound at residue Glu414. Phe438 is an L-phenylalanine binding site.

Belongs to the class-II aminoacyl-tRNA synthetase family. Phe-tRNA synthetase alpha subunit type 2 subfamily. As to quaternary structure, heterotetramer; dimer of two heterodimers formed by FARSA and FARSB.

The protein localises to the cytoplasm. The enzyme catalyses tRNA(Phe) + L-phenylalanine + ATP = L-phenylalanyl-tRNA(Phe) + AMP + diphosphate + H(+). The polypeptide is Phenylalanine--tRNA ligase alpha subunit (FARSA) (Homo sapiens (Human)).